Here is an 814-residue protein sequence, read N- to C-terminus: Valine--tRNA ligase (814 aa).

The 'HIGH' region signature appears at 46–56 (PTVSGQLHIGH). Residues 536–540 (KMSKS) carry the 'KMSKS' region motif. K539 provides a ligand contact to ATP.

Belongs to the class-I aminoacyl-tRNA synthetase family. ValS type 2 subfamily. As to quaternary structure, monomer.

Its subcellular location is the cytoplasm. The enzyme catalyses tRNA(Val) + L-valine + ATP = L-valyl-tRNA(Val) + AMP + diphosphate. Functionally, catalyzes the attachment of valine to tRNA(Val). As ValRS can inadvertently accommodate and process structurally similar amino acids such as threonine, to avoid such errors, it has a 'posttransfer' editing activity that hydrolyzes mischarged Thr-tRNA(Val) in a tRNA-dependent manner. In Rickettsia prowazekii (strain Madrid E), this protein is Valine--tRNA ligase.